The chain runs to 440 residues: Tryptophan synthase beta chain 2 (440 aa).

Lys110 is subject to N6-(pyridoxal phosphate)lysine.

It belongs to the TrpB family. Tetramer of two alpha and two beta chains. Requires pyridoxal 5'-phosphate as cofactor.

It catalyses the reaction (1S,2R)-1-C-(indol-3-yl)glycerol 3-phosphate + L-serine = D-glyceraldehyde 3-phosphate + L-tryptophan + H2O. Its pathway is amino-acid biosynthesis; L-tryptophan biosynthesis; L-tryptophan from chorismate: step 5/5. The beta subunit is responsible for the synthesis of L-tryptophan from indole and L-serine. The polypeptide is Tryptophan synthase beta chain 2 (trpB2) (Pyrococcus abyssi (strain GE5 / Orsay)).